A 172-amino-acid chain; its full sequence is Shikimate kinase (172 aa).

11-16 is a binding site for ATP; the sequence is GAGKST. Ser-15 provides a ligand contact to Mg(2+). Residues Asp-33, Arg-57, and Gly-79 each contribute to the substrate site. An ATP-binding site is contributed by Arg-117. Arg-136 is a substrate binding site. Position 153 (Arg-153) interacts with ATP.

The protein belongs to the shikimate kinase family. Monomer. Mg(2+) is required as a cofactor.

It is found in the cytoplasm. It catalyses the reaction shikimate + ATP = 3-phosphoshikimate + ADP + H(+). Its pathway is metabolic intermediate biosynthesis; chorismate biosynthesis; chorismate from D-erythrose 4-phosphate and phosphoenolpyruvate: step 5/7. Catalyzes the specific phosphorylation of the 3-hydroxyl group of shikimic acid using ATP as a cosubstrate. The polypeptide is Shikimate kinase (Pseudomonas savastanoi pv. phaseolicola (strain 1448A / Race 6) (Pseudomonas syringae pv. phaseolicola (strain 1448A / Race 6))).